Consider the following 407-residue polypeptide: Transcriptional regulator UL34 (407 aa).

The disordered stretch occupies residues 268-330 (AAGPPEADEN…ENEEEEEELF (63 aa)). The segment covering 273–286 (EADENNDEGEEDDD) has biased composition (acidic residues). Basic and acidic residues predominate over residues 287-301 (ELRHSDPAPLHDSKK). Over residues 302-312 (PRNARRPRTRV) the composition is skewed to basic residues.

Belongs to the HHV-5 UL34 protein family.

The protein resides in the host nucleus. In terms of biological role, acts as a transcriptional repressor of the US3 gene expression through a specific DNA sequence named the transcriptional repressive element (tre). The polypeptide is Transcriptional regulator UL34 (UL34) (Homo sapiens (Human)).